The sequence spans 410 residues: Chorismate synthase (410 aa).

The NADP(+) site is built by arginine 43 and arginine 49. Residues 143–145, 264–265, glycine 308, 323–327, and arginine 349 each bind FMN; these read RSS, QA, and KPIST.

This sequence belongs to the chorismate synthase family. In terms of assembly, homotetramer. The cofactor is FMNH2.

It carries out the reaction 5-O-(1-carboxyvinyl)-3-phosphoshikimate = chorismate + phosphate. It functions in the pathway metabolic intermediate biosynthesis; chorismate biosynthesis; chorismate from D-erythrose 4-phosphate and phosphoenolpyruvate: step 7/7. In terms of biological role, catalyzes the anti-1,4-elimination of the C-3 phosphate and the C-6 proR hydrogen from 5-enolpyruvylshikimate-3-phosphate (EPSP) to yield chorismate, which is the branch point compound that serves as the starting substrate for the three terminal pathways of aromatic amino acid biosynthesis. This reaction introduces a second double bond into the aromatic ring system. This is Chorismate synthase from Corynebacterium glutamicum (strain ATCC 13032 / DSM 20300 / JCM 1318 / BCRC 11384 / CCUG 27702 / LMG 3730 / NBRC 12168 / NCIMB 10025 / NRRL B-2784 / 534).